The chain runs to 161 residues: Negative cofactor 2 complex subunit beta (161 aa).

Positions 11-75 constitute a Histone-fold domain; the sequence is SLPKATVQKM…IAAEHIIKAL (65 aa). The segment covering 93–107 has biased composition (basic and acidic residues); sequence EHKEQQKNREKKSSK. Disordered stretches follow at residues 93–116 and 130–161; these read EHKE…VSRD and RERF…TKEN. Residues 135-147 are compositionally biased toward polar residues; it reads NQNIAHDNHTTTA.

The protein belongs to the NC2 beta/DR1 family.

It is found in the cytoplasm. The protein resides in the nucleus. In Schizosaccharomyces pombe (strain 972 / ATCC 24843) (Fission yeast), this protein is Negative cofactor 2 complex subunit beta (ncb2).